We begin with the raw amino-acid sequence, 132 residues long: Small ribosomal subunit protein uS8 (132 aa).

It belongs to the universal ribosomal protein uS8 family. In terms of assembly, part of the 30S ribosomal subunit. Contacts proteins S5 and S12.

In terms of biological role, one of the primary rRNA binding proteins, it binds directly to 16S rRNA central domain where it helps coordinate assembly of the platform of the 30S subunit. The sequence is that of Small ribosomal subunit protein uS8 from Flavobacterium psychrophilum (strain ATCC 49511 / DSM 21280 / CIP 103535 / JIP02/86).